Reading from the N-terminus, the 240-residue chain is Transcription factor bHLH101 (240 aa).

One can recognise a bHLH domain in the interval 65–117 (EKKLNHNASERDRRRKLNALYSSLRALLPLSDQKRKLSIPMTVARVVKYIPEQ).

Homodimer. Flowers.

Its subcellular location is the nucleus. The sequence is that of Transcription factor bHLH101 (BHLH101) from Arabidopsis thaliana (Mouse-ear cress).